The following is a 355-amino-acid chain: Protein RecA (355 aa).

65–72 is an ATP binding site; it reads GPESSGKT. Residues 333–355 are disordered; sequence IEEKDEKQAEAEKNENTNLFDEE. Residues 336–347 are compositionally biased toward basic and acidic residues; it reads KDEKQAEAEKNE.

This sequence belongs to the RecA family.

It is found in the cytoplasm. In terms of biological role, can catalyze the hydrolysis of ATP in the presence of single-stranded DNA, the ATP-dependent uptake of single-stranded DNA by duplex DNA, and the ATP-dependent hybridization of homologous single-stranded DNAs. It interacts with LexA causing its activation and leading to its autocatalytic cleavage. The protein is Protein RecA of Staphylococcus carnosus (strain TM300).